The sequence spans 241 residues: MSEQDKKQAAIKAAQAAADAVREAQAALAEEGRLLFKKSWIFIRGVPSMKFLPPEGPVEIAFAGRSNVGKSSLINALVGKKGLARTSNTPGRTQELNYFVPDGYSGENGDLPPLALVDMPGYGFAEAPKAQVDAWTRLVFDYLRGRTTLKRVYVLIDARHGIKKNDAEVLDLLDKAAVSYQIVLTKIDKIKPAGVPRLLEETHKLTYKRAACFPGIIATSSEKGQGLDDLRAAIALLLKEY.

The EngB-type G domain occupies 56–240 (GPVEIAFAGR…RAAIALLLKE (185 aa)). Residues 64 to 71 (GRSNVGKS), 91 to 95 (GRTQE), 118 to 121 (DMPG), 185 to 188 (TKID), and 219 to 221 (TSS) each bind GTP. The Mg(2+) site is built by serine 71 and threonine 93.

Belongs to the TRAFAC class TrmE-Era-EngA-EngB-Septin-like GTPase superfamily. EngB GTPase family. Requires Mg(2+) as cofactor.

In terms of biological role, necessary for normal cell division and for the maintenance of normal septation. The protein is Probable GTP-binding protein EngB of Brucella suis biovar 1 (strain 1330).